The sequence spans 563 residues: Arginine--tRNA ligase (563 aa).

Positions 121 to 131 (PNIAKPFSIGH) match the 'HIGH' region motif.

The protein belongs to the class-I aminoacyl-tRNA synthetase family. Monomer.

The protein resides in the cytoplasm. It carries out the reaction tRNA(Arg) + L-arginine + ATP = L-arginyl-tRNA(Arg) + AMP + diphosphate. This Streptococcus pneumoniae (strain ATCC BAA-255 / R6) protein is Arginine--tRNA ligase.